Reading from the N-terminus, the 98-residue chain is MLEQRNPAEALTVSVLNSQSQVTNKPLRDSVKQALRNYLSQLDGQDVNDLYELVLAEVEHPMLDMIMQYTRGNQTRAATMLGINRGTLRKKLKKYGMG.

Positions 74–93 (QTRAATMLGINRGTLRKKLK) form a DNA-binding region, H-T-H motif.

The protein belongs to the transcriptional regulatory Fis family. As to quaternary structure, homodimer.

Its function is as follows. Activates ribosomal RNA transcription. Plays a direct role in upstream activation of rRNA promoters. The chain is DNA-binding protein Fis from Histophilus somni (strain 2336) (Haemophilus somnus).